We begin with the raw amino-acid sequence, 51 residues long: Protein alpha-3 (51 aa).

The sequence is that of Protein alpha-3 (alpha) from Bos taurus (Bovine).